We begin with the raw amino-acid sequence, 192 residues long: Protein GrpE (192 aa).

The tract at residues 1-43 is disordered; that stretch reads MSKEEFPHEKDLKDEVTPDKAPKKDPKAASKEEVKEDPAKDYE.

Belongs to the GrpE family. Homodimer.

Its subcellular location is the cytoplasm. Participates actively in the response to hyperosmotic and heat shock by preventing the aggregation of stress-denatured proteins, in association with DnaK and GrpE. It is the nucleotide exchange factor for DnaK and may function as a thermosensor. Unfolded proteins bind initially to DnaJ; upon interaction with the DnaJ-bound protein, DnaK hydrolyzes its bound ATP, resulting in the formation of a stable complex. GrpE releases ADP from DnaK; ATP binding to DnaK triggers the release of the substrate protein, thus completing the reaction cycle. Several rounds of ATP-dependent interactions between DnaJ, DnaK and GrpE are required for fully efficient folding. This is Protein GrpE from Lactobacillus gasseri (strain ATCC 33323 / DSM 20243 / BCRC 14619 / CIP 102991 / JCM 1131 / KCTC 3163 / NCIMB 11718 / NCTC 13722 / AM63).